Consider the following 290-residue polypeptide: Shikimate dehydrogenase (NADP(+)) (290 aa).

Shikimate-binding positions include 22 to 24 (SLS) and threonine 68. Lysine 72 serves as the catalytic Proton acceptor. Shikimate-binding residues include asparagine 93 and aspartate 108. Residues 133-137 (GSGGS) and isoleucine 228 each bind NADP(+). Tyrosine 230 lines the shikimate pocket. NADP(+) is bound at residue glycine 251.

It belongs to the shikimate dehydrogenase family. As to quaternary structure, homodimer.

It catalyses the reaction shikimate + NADP(+) = 3-dehydroshikimate + NADPH + H(+). The protein operates within metabolic intermediate biosynthesis; chorismate biosynthesis; chorismate from D-erythrose 4-phosphate and phosphoenolpyruvate: step 4/7. In terms of biological role, involved in the biosynthesis of the chorismate, which leads to the biosynthesis of aromatic amino acids. Catalyzes the reversible NADPH linked reduction of 3-dehydroshikimate (DHSA) to yield shikimate (SA). This is Shikimate dehydrogenase (NADP(+)) from Leptospira borgpetersenii serovar Hardjo-bovis (strain JB197).